The sequence spans 328 residues: Malate dehydrogenase (328 aa).

12 to 18 (GAAGQIA) provides a ligand contact to NAD(+). Residues Arg93 and Arg99 each contribute to the substrate site. NAD(+) contacts are provided by residues Asn106, Gln113, and 130–132 (VGN). Residues Asn132 and Arg163 each contribute to the substrate site. Catalysis depends on His188, which acts as the Proton acceptor.

The protein belongs to the LDH/MDH superfamily. MDH type 2 family.

It catalyses the reaction (S)-malate + NAD(+) = oxaloacetate + NADH + H(+). In terms of biological role, catalyzes the reversible oxidation of malate to oxaloacetate. This chain is Malate dehydrogenase, found in Burkholderia cenocepacia (strain HI2424).